A 708-amino-acid polypeptide reads, in one-letter code: ATP-dependent RNA helicase laf-1 (708 aa).

Positions 1–21 (MESNQSNNGGSGNAALNRGGR) are enriched in low complexity. A disordered region spans residues 1–191 (MESNQSNNGG…RGTSKWENRG (191 aa)). Residues 48–70 (GAGGGGYRRGGGNSGGGGGGGYD) show a composition bias toward gly residues. 2 stretches are compositionally biased toward basic and acidic residues: residues 72-83 (GYNDNRDDRDNR) and 90-99 (GRDRNYEDRG). The span at 100–123 (YNGGGGGGGNRGYNNNRGGGGGGY) shows a compositional bias: gly residues. The Q motif motif lies at 231–259 (SLFSDLSLHEWIEENIKTAGYDRPTPVQK). The 192-residue stretch at 262-453 (IPALQGGRDL…QDFLKENYVF (192 aa)) folds into the Helicase ATP-binding domain. 275-282 (AQTGSGKT) provides a ligand contact to ATP. The DEAD box motif lies at 397–400 (DEAD). The region spanning 465–626 (NIMQKIVWVE…ELPDWLEGMS (162 aa)) is the Helicase C-terminal domain. The tract at residues 623–708 (EGMSGDMRSG…RAQPQQDWWS (86 aa)) is disordered. 2 stretches are compositionally biased toward gly residues: residues 630-647 (RSGGGYRGRGGRGNGQRF) and 656-692 (GGSGNGGGGNGGGGGFGGGGQRSGGGGGFQSGGGGGR). The span at 699-708 (RAQPQQDWWS) shows a compositional bias: polar residues.

It belongs to the DEAD box helicase family. DDX3/DED1 subfamily. Binds RNA as a monomer at low laf-1 concentrations and as a dimer at high laf-1 concentrations. In terms of tissue distribution, expressed in the germline and soma of young adult hermaphrodites.

It is found in the cytoplasm. The protein resides in the cytoplasmic granule. It localises to the nucleus. Its subcellular location is the stress granule. The protein localises to the inflammasome. It is found in the cell membrane. The protein resides in the cell projection. It localises to the lamellipodium. The catalysed reaction is ATP + H2O = ADP + phosphate + H(+). Functionally, multifunctional ATP-dependent RNA helicase. Plays a role in RNA remodeling, but is not required for RNA unwinding. Binds to RNA in a concentration-dependent manner to stimulate annealing between two complementary strands of RNA. This process is also dependent upon ATP; ATP reduces binding to RNA and subsequently diminishes RNA annealing. Involved in many cellular processes, which do not necessarily require its ATPase/helicase catalytic activities. Involved in the regulation of transcription and translation initiation. Involved in innate immunity. Involved in both stress and inflammatory responses. Promotes liquid-liquid phase separation of P granules, which is a process important for intracellular organization and stress granule assembly. Required for embryonic development. Plays a role in sexual cell fate determination by negatively regulating the translation of the sex determining protein tra-2. May play a protective role in the response to heat and oxidative stress. May negatively regulate extrinsic apoptotic signaling pathway via death domain receptors. May be involved in mitotic chromosome segregation. The polypeptide is ATP-dependent RNA helicase laf-1 (Caenorhabditis elegans).